Here is a 277-residue protein sequence, read N- to C-terminus: Type II restriction enzyme RsrI (277 aa).

Belongs to the EcoRI type II restriction endonuclease family. As to quaternary structure, homodimer. Mg(2+) is required as a cofactor.

It carries out the reaction Endonucleolytic cleavage of DNA to give specific double-stranded fragments with terminal 5'-phosphates.. In terms of biological role, a P subtype restriction enzyme that recognizes the double-stranded sequence 5'-GAATTC-3' and cleaves after G-1. The protein is Type II restriction enzyme RsrI (rsrIR) of Cereibacter sphaeroides (Rhodobacter sphaeroides).